The primary structure comprises 280 residues: Cycloeucalenol cycloisomerase (280 aa).

The next 6 helical transmembrane spans lie at 22–42 (LFFLFYTPFWLTLCLGIVVPY), 53–73 (YLLLALVSAVPAFVIPMLLVG), 89–109 (ANLWIIVFSYVGNYFWTHYFF), 167–187 (FEAAWILALSYFIAYLETIAI), 201–221 (MYRVGCLFYAIYFIVSFPMFF), and 244–264 (AMLVTIILDLWRLFLGPIVPL).

Its subcellular location is the membrane. The catalysed reaction is cycloeucalenol = obtusifoliol. Converts pentacyclic cyclopropyl sterols to tetracyclic sterols. This Arabidopsis thaliana (Mouse-ear cress) protein is Cycloeucalenol cycloisomerase (CPI1).